The primary structure comprises 376 residues: N-acetyldiaminopimelate deacetylase (376 aa).

Asp-69 is an active-site residue. Glu-128 serves as the catalytic Proton acceptor.

This sequence belongs to the peptidase M20A family. N-acetyldiaminopimelate deacetylase subfamily.

The enzyme catalyses N-acetyl-(2S,6S)-2,6-diaminopimelate + H2O = (2S,6S)-2,6-diaminopimelate + acetate. It functions in the pathway amino-acid biosynthesis; L-lysine biosynthesis via DAP pathway; LL-2,6-diaminopimelate from (S)-tetrahydrodipicolinate (acetylase route): step 3/3. Catalyzes the conversion of N-acetyl-diaminopimelate to diaminopimelate and acetate. The chain is N-acetyldiaminopimelate deacetylase from Streptococcus pneumoniae (strain Hungary19A-6).